Here is a 103-residue protein sequence, read N- to C-terminus: Defensin-like protein 289 (103 aa).

A signal peptide spans 1 to 29 (MATLKTTIFIIFILYISCTMFVNIFRVQA). 6 disulfides stabilise this stretch: cysteine 33–cysteine 50, cysteine 39–cysteine 55, cysteine 43–cysteine 57, cysteine 72–cysteine 92, cysteine 78–cysteine 98, and cysteine 84–cysteine 100.

The protein belongs to the DEFL family.

Its subcellular location is the secreted. This chain is Defensin-like protein 289, found in Arabidopsis thaliana (Mouse-ear cress).